The sequence spans 335 residues: Vitamin B12 import system permease protein BtuC (335 aa).

9 helical membrane-spanning segments follow: residues 21 to 43, 63 to 82, 95 to 114, 119 to 141, 153 to 175, 195 to 212, 244 to 266, 281 to 303, and 310 to 329; these read FLAI…GENW, FPRV…AGAV, GLLG…VLMF, PFWL…LLTF, LLVG…YFST, WRHQ…IWLS, FAVG…IGLV, TLLP…LSRL, and VPIG…WLLL.

The protein belongs to the binding-protein-dependent transport system permease family. FecCD subfamily. As to quaternary structure, the complex is composed of two ATP-binding proteins (BtuD), two transmembrane proteins (BtuC) and a solute-binding protein (BtuF).

It localises to the cell inner membrane. Its function is as follows. Part of the ABC transporter complex BtuCDF involved in vitamin B12 import. Involved in the translocation of the substrate across the membrane. The chain is Vitamin B12 import system permease protein BtuC from Photorhabdus laumondii subsp. laumondii (strain DSM 15139 / CIP 105565 / TT01) (Photorhabdus luminescens subsp. laumondii).